Consider the following 407-residue polypeptide: Putative serine/threonine-protein kinase C01C4.3 (407 aa).

Over residues 33 to 57 (NQLQNHPPRNATQSPQRQPRTSESS) the composition is skewed to polar residues. Residues 33–68 (NQLQNHPPRNATQSPQRQPRTSESSMDFPRSALRRN) are disordered. The Protein kinase domain occupies 126–397 (YTVNKQLGTG…RKCLAKEKLL (272 aa)). ATP contacts are provided by residues 132–140 (LGTGRFGFI) and Lys-155. The active-site Proton acceptor is Asn-251.

The protein belongs to the protein kinase superfamily. Ser/Thr protein kinase family.

The catalysed reaction is L-seryl-[protein] + ATP = O-phospho-L-seryl-[protein] + ADP + H(+). It catalyses the reaction L-threonyl-[protein] + ATP = O-phospho-L-threonyl-[protein] + ADP + H(+). In Caenorhabditis elegans, this protein is Putative serine/threonine-protein kinase C01C4.3.